A 92-amino-acid chain; its full sequence is Nodulation protein F (92 aa).

Residues 4 to 88 (QLTLEIISAI…DVVEAVRGLL (85 aa)) enclose the Carrier domain. Serine 45 is modified (O-(pantetheine 4'-phosphoryl)serine).

Post-translationally, 4'-phosphopantetheine is transferred from CoA to a specific serine of apo-NodF.

In terms of biological role, proposed to synthesize nod factor fatty acyl chain. Involved in trans-2,trans-4,trans-6,cis-11-octadecatetraenoic acid biosynthesis. This Rhizobium leguminosarum bv. viciae protein is Nodulation protein F (nodF).